Reading from the N-terminus, the 168-residue chain is MTRLEDLPYRPCVGLAIFNRAGQVFLGQRLSGPEHVDATHSWQMPQGGIDKGEEPYEAALRELYEETSIRSVVKLGEVEDWLSYDLPGRVAGEAWKGKYRGQTQKWFALRFTGDEGEIDILKPGGGAHKAEFCNWRWDALDRAAELVIPFKRQVYERVAREFRRFAHD.

A Nudix hydrolase domain is found at 8–160 (PYRPCVGLAI…KRQVYERVAR (153 aa)). Positions 47 to 68 (GGIDKGEEPYEAALRELYEETS) match the Nudix box motif.

It belongs to the Nudix hydrolase family. RppH subfamily. It depends on a divalent metal cation as a cofactor.

Accelerates the degradation of transcripts by removing pyrophosphate from the 5'-end of triphosphorylated RNA, leading to a more labile monophosphorylated state that can stimulate subsequent ribonuclease cleavage. This is RNA pyrophosphohydrolase from Azorhizobium caulinodans (strain ATCC 43989 / DSM 5975 / JCM 20966 / LMG 6465 / NBRC 14845 / NCIMB 13405 / ORS 571).